The following is a 534-amino-acid chain: CTP synthase (534 aa).

The tract at residues Met-1 to Leu-265 is amidoligase domain. Ser-12 contributes to the CTP binding site. Position 12 (Ser-12) interacts with UTP. Gly-13–Ile-18 serves as a coordination point for ATP. L-glutamine is bound at residue Tyr-53. Asp-70 lines the ATP pocket. 2 residues coordinate Mg(2+): Asp-70 and Glu-140. CTP-binding positions include Asp-147–Glu-149, Lys-186–Gln-191, and Lys-222. UTP contacts are provided by residues Lys-186–Gln-191 and Lys-222. In terms of domain architecture, Glutamine amidotransferase type-1 spans Lys-289–Glu-530. Gly-352 contributes to the L-glutamine binding site. Cys-379 acts as the Nucleophile; for glutamine hydrolysis in catalysis. Residues Leu-380 to Gln-383, Glu-403, and Arg-460 contribute to the L-glutamine site. Catalysis depends on residues His-503 and Glu-505.

Belongs to the CTP synthase family. Homotetramer.

The catalysed reaction is UTP + L-glutamine + ATP + H2O = CTP + L-glutamate + ADP + phosphate + 2 H(+). It catalyses the reaction L-glutamine + H2O = L-glutamate + NH4(+). The enzyme catalyses UTP + NH4(+) + ATP = CTP + ADP + phosphate + 2 H(+). The protein operates within pyrimidine metabolism; CTP biosynthesis via de novo pathway; CTP from UDP: step 2/2. With respect to regulation, allosterically activated by GTP, when glutamine is the substrate; GTP has no effect on the reaction when ammonia is the substrate. The allosteric effector GTP functions by stabilizing the protein conformation that binds the tetrahedral intermediate(s) formed during glutamine hydrolysis. Inhibited by the product CTP, via allosteric rather than competitive inhibition. Catalyzes the ATP-dependent amination of UTP to CTP with either L-glutamine or ammonia as the source of nitrogen. Regulates intracellular CTP levels through interactions with the four ribonucleotide triphosphates. This is CTP synthase from Methanosarcina barkeri (strain Fusaro / DSM 804).